The primary structure comprises 184 residues: UPF0397 protein SAS2570 (184 aa).

The next 5 helical transmembrane spans lie at Val-11–Pro-31, Ala-44–Val-64, Ala-77–Leu-97, Met-111–Pro-131, and Gln-148–Leu-168.

This sequence belongs to the UPF0397 family.

The protein resides in the cell membrane. This is UPF0397 protein SAS2570 from Staphylococcus aureus (strain MSSA476).